Consider the following 910-residue polypeptide: DNA mismatch repair protein MutS (910 aa).

Residues 1 to 11 (MEAKVEEKEPE) show a composition bias toward basic and acidic residues. The interval 1–21 (MEAKVEEKEPEPVENAGPDAP) is disordered. 658 to 665 (GPNMGGKS) lines the ATP pocket.

This sequence belongs to the DNA mismatch repair MutS family.

This protein is involved in the repair of mismatches in DNA. It is possible that it carries out the mismatch recognition step. This protein has a weak ATPase activity. This chain is DNA mismatch repair protein MutS, found in Brucella suis (strain ATCC 23445 / NCTC 10510).